The following is a 204-amino-acid chain: Thymidylate kinase (204 aa).

ATP is bound at residue 9–16 (GIEASGKT).

This sequence belongs to the thymidylate kinase family.

It catalyses the reaction dTMP + ATP = dTDP + ADP. In terms of biological role, phosphorylation of dTMP to form dTDP in both de novo and salvage pathways of dTTP synthesis. This chain is Thymidylate kinase, found in Sulfurihydrogenibium sp. (strain YO3AOP1).